The primary structure comprises 155 residues: 6,7-dimethyl-8-ribityllumazine synthase (155 aa).

Residues F22, 57 to 59, and 81 to 83 contribute to the 5-amino-6-(D-ribitylamino)uracil site; these read AYE and SVI. 86–87 contacts (2S)-2-hydroxy-3-oxobutyl phosphate; that stretch reads GT. Residue H88 is the Proton donor of the active site. F113 is a 5-amino-6-(D-ribitylamino)uracil binding site. R127 serves as a coordination point for (2S)-2-hydroxy-3-oxobutyl phosphate.

It belongs to the DMRL synthase family. In terms of assembly, forms an icosahedral capsid composed of 60 subunits, arranged as a dodecamer of pentamers.

It catalyses the reaction (2S)-2-hydroxy-3-oxobutyl phosphate + 5-amino-6-(D-ribitylamino)uracil = 6,7-dimethyl-8-(1-D-ribityl)lumazine + phosphate + 2 H2O + H(+). Its pathway is cofactor biosynthesis; riboflavin biosynthesis; riboflavin from 2-hydroxy-3-oxobutyl phosphate and 5-amino-6-(D-ribitylamino)uracil: step 1/2. Its function is as follows. Catalyzes the formation of 6,7-dimethyl-8-ribityllumazine by condensation of 5-amino-6-(D-ribitylamino)uracil with 3,4-dihydroxy-2-butanone 4-phosphate. This is the penultimate step in the biosynthesis of riboflavin. The protein is 6,7-dimethyl-8-ribityllumazine synthase of Photobacterium phosphoreum.